We begin with the raw amino-acid sequence, 132 residues long: Small ribosomal subunit protein uS8 (132 aa).

It belongs to the universal ribosomal protein uS8 family. In terms of assembly, part of the 30S ribosomal subunit. Contacts proteins S5 and S12.

Its function is as follows. One of the primary rRNA binding proteins, it binds directly to 16S rRNA central domain where it helps coordinate assembly of the platform of the 30S subunit. This is Small ribosomal subunit protein uS8 from Brevibacillus brevis (strain 47 / JCM 6285 / NBRC 100599).